A 147-amino-acid polypeptide reads, in one-letter code: Large ribosomal subunit protein uL15 (147 aa).

The segment covering 1-20 has biased composition (basic and acidic residues); the sequence is MTMHLNDLKPADGARTERTR. A disordered region spans residues 1–64; it reads MTMHLNDLKP…GGQTPMQRRL (64 aa). Residues 23-33 show a composition bias toward gly residues; that stretch reads RGIGSGLGKTC. Residues 34 to 47 show a composition bias toward basic residues; that stretch reads GRGHKGSFARKGGG.

Belongs to the universal ribosomal protein uL15 family. As to quaternary structure, part of the 50S ribosomal subunit.

In terms of biological role, binds to the 23S rRNA. The sequence is that of Large ribosomal subunit protein uL15 from Xanthomonas campestris pv. campestris (strain 8004).